The chain runs to 171 residues: ATP synthase subunit b (171 aa).

Residues 13-33 (GVEWGTTFVTLVTFVILIILL) traverse the membrane as a helical segment.

It belongs to the ATPase B chain family. As to quaternary structure, F-type ATPases have 2 components, F(1) - the catalytic core - and F(0) - the membrane proton channel. F(1) has five subunits: alpha(3), beta(3), gamma(1), delta(1), epsilon(1). F(0) has three main subunits: a(1), b(2) and c(10-14). The alpha and beta chains form an alternating ring which encloses part of the gamma chain. F(1) is attached to F(0) by a central stalk formed by the gamma and epsilon chains, while a peripheral stalk is formed by the delta and b chains.

The protein localises to the cell membrane. Functionally, f(1)F(0) ATP synthase produces ATP from ADP in the presence of a proton or sodium gradient. F-type ATPases consist of two structural domains, F(1) containing the extramembraneous catalytic core and F(0) containing the membrane proton channel, linked together by a central stalk and a peripheral stalk. During catalysis, ATP synthesis in the catalytic domain of F(1) is coupled via a rotary mechanism of the central stalk subunits to proton translocation. Component of the F(0) channel, it forms part of the peripheral stalk, linking F(1) to F(0). The protein is ATP synthase subunit b of Staphylococcus epidermidis (strain ATCC 12228 / FDA PCI 1200).